Consider the following 276-residue polypeptide: 2,3,4,5-tetrahydropyridine-2,6-dicarboxylate N-succinyltransferase (276 aa).

Substrate contacts are provided by R108 and D145.

This sequence belongs to the transferase hexapeptide repeat family. As to quaternary structure, homotrimer.

It is found in the cytoplasm. The enzyme catalyses (S)-2,3,4,5-tetrahydrodipicolinate + succinyl-CoA + H2O = (S)-2-succinylamino-6-oxoheptanedioate + CoA. It functions in the pathway amino-acid biosynthesis; L-lysine biosynthesis via DAP pathway; LL-2,6-diaminopimelate from (S)-tetrahydrodipicolinate (succinylase route): step 1/3. In Caulobacter vibrioides (strain ATCC 19089 / CIP 103742 / CB 15) (Caulobacter crescentus), this protein is 2,3,4,5-tetrahydropyridine-2,6-dicarboxylate N-succinyltransferase.